A 1322-amino-acid chain; its full sequence is Myosin-1 (1322 aa).

A Myosin motor domain is found at 42 to 728 (AGVSDMTLLT…TLFALETMRD (687 aa)). An ATP-binding site is contributed by 135 to 142 (GESGAGKT). S369 bears the Phosphoserine mark. Positions 417–499 (VIGVLDIYGF…PGIFSALNDA (83 aa)) are actin-binding. IQ domains are found at residues 732–752 (HNMA…REES) and 753–778 (ARRI…YGHQ). One can recognise a TH1 domain in the interval 786-980 (RRRFSLISMR…SGEPPTSVSR (195 aa)). Disordered regions lie at residues 966-1090 (IVSV…MPSY) and 1137-1162 (VQQL…ATPA). 2 stretches are compositionally biased toward low complexity: residues 1000–1017 (SRPV…PTTT) and 1027–1056 (GGTA…ASGA). Polar residues-rich tracts occupy residues 1078-1087 (PATSAPSSGM) and 1137-1148 (VQQLGSSSTAQT). The 60-residue stretch at 1184-1243 (RRLPRYRALYDFETQEAGELPLRTGDIVELEEKEENGWWLVKKGSTEGWSPADYLELIAE) folds into the SH3 domain. The tract at residues 1246 to 1300 (AAKPRPPPPAKPASAKPAAAPARVSQSSVTSSWTPPDSHAAPVAVMPGMGDPGGF) is disordered. A compositionally biased stretch (low complexity) spans 1257–1267 (PASAKPAAAPA). Over residues 1269–1280 (VSQSSVTSSWTP) the composition is skewed to polar residues.

Belongs to the TRAFAC class myosin-kinesin ATPase superfamily. Myosin family. Phosphorylation of the TEDS site (Ser-369) is required for the polarization of the actin cytoskeleton. Phosphorylation probably activates the myosin-I ATPase activity.

The protein resides in the cytoplasm. It localises to the cytoskeleton. It is found in the actin patch. In terms of biological role, type-I myosin implicated in the organization of the actin cytoskeleton. Required for proper actin cytoskeleton polarization. At the cell cortex, assembles in patch-like structures together with proteins from the actin-polymerizing machinery and promotes actin assembly. Functions as actin nucleation-promoting factor (NPF) for the Arp2/3 complex. This Malassezia globosa (strain ATCC MYA-4612 / CBS 7966) (Dandruff-associated fungus) protein is Myosin-1 (MYO1).